Consider the following 248-residue polypeptide: Triosephosphate isomerase (248 aa).

Positions 12 and 14 each coordinate substrate. An igE-binding region spans residues 16-30 (NGDRAGIDSIISFMK). The active-site Electrophile is histidine 95. Glutamate 165 functions as the Proton acceptor in the catalytic mechanism. IgE-binding regions lie at residues 166 to 180 (PVWAIGTGKTATPEQ) and 205 to 219 (RIIYGGSVTPGNCKE).

It belongs to the triosephosphate isomerase family. In terms of assembly, homodimer. In terms of tissue distribution, expressed in skeletal muscle (at protein level).

It localises to the cytoplasm. The catalysed reaction is D-glyceraldehyde 3-phosphate = dihydroxyacetone phosphate. It carries out the reaction dihydroxyacetone phosphate = methylglyoxal + phosphate. It functions in the pathway carbohydrate biosynthesis; gluconeogenesis. The protein operates within carbohydrate degradation; glycolysis; D-glyceraldehyde 3-phosphate from glycerone phosphate: step 1/1. In terms of biological role, triosephosphate isomerase is an extremely efficient metabolic enzyme that catalyzes the interconversion between dihydroxyacetone phosphate (DHAP) and D-glyceraldehyde-3-phosphate (G3P) in glycolysis and gluconeogenesis. It is also responsible for the non-negligible production of methylglyoxal a reactive cytotoxic side-product that modifies and can alter proteins, DNA and lipids. This Procambarus clarkii (Red swamp crayfish) protein is Triosephosphate isomerase.